A 315-amino-acid polypeptide reads, in one-letter code: Methionyl-tRNA formyltransferase (315 aa).

113–116 serves as a coordination point for (6S)-5,6,7,8-tetrahydrofolate; that stretch reads SLLP.

This sequence belongs to the Fmt family.

It catalyses the reaction L-methionyl-tRNA(fMet) + (6R)-10-formyltetrahydrofolate = N-formyl-L-methionyl-tRNA(fMet) + (6S)-5,6,7,8-tetrahydrofolate + H(+). Attaches a formyl group to the free amino group of methionyl-tRNA(fMet). The formyl group appears to play a dual role in the initiator identity of N-formylmethionyl-tRNA by promoting its recognition by IF2 and preventing the misappropriation of this tRNA by the elongation apparatus. The polypeptide is Methionyl-tRNA formyltransferase (Shigella boydii serotype 18 (strain CDC 3083-94 / BS512)).